The sequence spans 213 residues: 3,4-dihydroxy-2-butanone 4-phosphate synthase (213 aa).

Residues Arg27 to Glu28, Asp32, Arg140 to Thr144, and Glu164 each bind D-ribulose 5-phosphate. Glu28 is a binding site for Mg(2+). His143 contributes to the Mg(2+) binding site.

The protein belongs to the DHBP synthase family. In terms of assembly, homodimer. Mg(2+) serves as cofactor. It depends on Mn(2+) as a cofactor.

It catalyses the reaction D-ribulose 5-phosphate = (2S)-2-hydroxy-3-oxobutyl phosphate + formate + H(+). It functions in the pathway cofactor biosynthesis; riboflavin biosynthesis; 2-hydroxy-3-oxobutyl phosphate from D-ribulose 5-phosphate: step 1/1. In terms of biological role, catalyzes the conversion of D-ribulose 5-phosphate to formate and 3,4-dihydroxy-2-butanone 4-phosphate. The chain is 3,4-dihydroxy-2-butanone 4-phosphate synthase from Agrobacterium fabrum (strain C58 / ATCC 33970) (Agrobacterium tumefaciens (strain C58)).